The chain runs to 238 residues: Purine nucleoside phosphorylase DeoD-type (238 aa).

A purine D-ribonucleoside is bound at residue His4. Phosphate contacts are provided by residues Gly20, Arg24, Arg43, and Arg87–Ser90. Residues Glu179 to Glu181 and Ser203 to Asp204 contribute to the a purine D-ribonucleoside site. The active-site Proton donor is the Asp204.

This sequence belongs to the PNP/UDP phosphorylase family. As to quaternary structure, homohexamer; trimer of homodimers.

It catalyses the reaction a purine D-ribonucleoside + phosphate = a purine nucleobase + alpha-D-ribose 1-phosphate. It carries out the reaction a purine 2'-deoxy-D-ribonucleoside + phosphate = a purine nucleobase + 2-deoxy-alpha-D-ribose 1-phosphate. Its function is as follows. Catalyzes the reversible phosphorolytic breakdown of the N-glycosidic bond in the beta-(deoxy)ribonucleoside molecules, with the formation of the corresponding free purine bases and pentose-1-phosphate. This chain is Purine nucleoside phosphorylase DeoD-type, found in Actinobacillus succinogenes (strain ATCC 55618 / DSM 22257 / CCUG 43843 / 130Z).